The following is a 263-amino-acid chain: MKLKSFGVFGNPIKHSKSPLIHNACFLTFQKELRFLGHYHPILLPLESHIKSEFLHLGLSGANVTLPFKERAFQVCDKIKGIALECGAVNTLVLENDELVGYNTDALGFYLSLKQKNYQNALILGAGGSAKALACELKKQGLQVSVLNRSSRGLDFFQRLGCDCFMEPPKSAFDLIINATSASLHNELPLNKEVLKGYFKEGKLAYDLAYGFLTPFLSLAKELKTPFQDGKDMLIYQAALSFEKFSASQIPYSKAFEVMRSVF.

Shikimate contacts are provided by residues 16 to 18 (SKS) and Thr65. Catalysis depends on Lys69, which acts as the Proton acceptor. The shikimate site is built by Asn90 and Asp105. NADP(+)-binding positions include 125–129 (GAGGS), Ser181, and Leu208. A shikimate-binding site is contributed by Tyr210. Gly230 serves as a coordination point for NADP(+). Residue Gln237 coordinates shikimate.

Belongs to the shikimate dehydrogenase family. In terms of assembly, homodimer.

It catalyses the reaction shikimate + NADP(+) = 3-dehydroshikimate + NADPH + H(+). It functions in the pathway metabolic intermediate biosynthesis; chorismate biosynthesis; chorismate from D-erythrose 4-phosphate and phosphoenolpyruvate: step 4/7. Its function is as follows. Involved in the biosynthesis of the chorismate, which leads to the biosynthesis of aromatic amino acids. Catalyzes the reversible NADPH linked reduction of 3-dehydroshikimate (DHSA) to yield shikimate (SA). The protein is Shikimate dehydrogenase (NADP(+)) of Helicobacter pylori (strain ATCC 700392 / 26695) (Campylobacter pylori).